Consider the following 468-residue polypeptide: Tyramine receptor tyra-2 (468 aa).

At methionine 1–serine 23 the chain is on the extracellular side. A helical membrane pass occupies residues alanine 24–leucine 43. The Cytoplasmic portion of the chain corresponds to tyrosine 44–asparagine 54. A helical transmembrane segment spans residues leucine 55–valine 77. The Extracellular portion of the chain corresponds to tyrosine 78–cysteine 91. Cysteine 91 and cysteine 177 are oxidised to a cystine. The chain crosses the membrane as a helical span at residues glutamate 92–leucine 114. Topologically, residues aspartate 115–threonine 134 are cytoplasmic. The chain crosses the membrane as a helical span at residues alanine 135 to tryptophan 157. Residues lysine 158–threonine 186 are Extracellular-facing. Residue asparagine 171 is glycosylated (N-linked (GlcNAc...) asparagine). A helical transmembrane segment spans residues valine 187–tyrosine 209. Topologically, residues glutamine 210–lysine 387 are cytoplasmic. Residues aspartate 252 to threonine 306 form a disordered region. Acidic residues-rich tracts occupy residues alanine 255–glutamate 265 and isoleucine 281–serine 292. A helical membrane pass occupies residues valine 388–valine 410. Residues glutamine 411–methionine 424 lie on the Extracellular side of the membrane. A helical membrane pass occupies residues phenylalanine 425–phenylalanine 444. The Cytoplasmic portion of the chain corresponds to asparagine 445 to valine 468.

This sequence belongs to the G-protein coupled receptor 1 family. As to expression, expressed in the pharyngeal neurons, MCL/R and NSML/R and the AS group of amphidial sensory neurons, ASEL/R, AGSL/R, ASHL/R and ASIL/R.

It localises to the cell membrane. G-protein coupled receptor for tyramine, a known neurotransmitter and neuromodulator and direct precursor of octopamine. Expression in amphidial sensory neurons suggests a role in chemosensation. The polypeptide is Tyramine receptor tyra-2 (tyra-2) (Caenorhabditis elegans).